Consider the following 130-residue polypeptide: Small ribosomal subunit protein uS8 (130 aa).

This sequence belongs to the universal ribosomal protein uS8 family. In terms of assembly, part of the 30S ribosomal subunit. Contacts proteins S5 and S12.

Functionally, one of the primary rRNA binding proteins, it binds directly to 16S rRNA central domain where it helps coordinate assembly of the platform of the 30S subunit. This chain is Small ribosomal subunit protein uS8, found in Opitutus terrae (strain DSM 11246 / JCM 15787 / PB90-1).